Consider the following 307-residue polypeptide: Glycine--tRNA ligase alpha subunit (307 aa).

This sequence belongs to the class-II aminoacyl-tRNA synthetase family. Tetramer of two alpha and two beta subunits.

Its subcellular location is the cytoplasm. It carries out the reaction tRNA(Gly) + glycine + ATP = glycyl-tRNA(Gly) + AMP + diphosphate. The sequence is that of Glycine--tRNA ligase alpha subunit from Xylella fastidiosa (strain M23).